The sequence spans 971 residues: DNA-directed RNA polymerase subunit Rpo1N (971 aa).

Met-1 bears the Blocked amino end (Met) mark. Zn(2+)-binding residues include Cys-62, Cys-65, Cys-72, His-75, Cys-102, Cys-105, Cys-149, and Cys-152. Residues 185–204 (SMQPDEDEDDAGVSPQELAE) are disordered. Mg(2+) is bound by residues Asp-527, Asp-529, and Asp-531. The segment at 951 to 971 (VEEPPTNLSEHGAAWEVESDD) is disordered.

Belongs to the RNA polymerase beta' chain family. As to quaternary structure, part of the RNA polymerase complex. Mg(2+) is required as a cofactor. Requires Zn(2+) as cofactor. The N-terminus is blocked.

The protein localises to the cytoplasm. It catalyses the reaction RNA(n) + a ribonucleoside 5'-triphosphate = RNA(n+1) + diphosphate. In terms of biological role, DNA-dependent RNA polymerase (RNAP) catalyzes the transcription of DNA into RNA using the four ribonucleoside triphosphates as substrates. Forms the clamp head domain. The polypeptide is DNA-directed RNA polymerase subunit Rpo1N (Halobacterium salinarum (strain ATCC 29341 / DSM 671 / R1)).